The following is a 430-amino-acid chain: Glutamyl-tRNA reductase (430 aa).

Residues 50–53 (TCNR), S108, 113–115 (EPQ), and Q119 each bind substrate. C51 serves as the catalytic Nucleophile. NADP(+) is bound at residue 188–193 (GAGEMA).

It belongs to the glutamyl-tRNA reductase family. Homodimer.

It carries out the reaction (S)-4-amino-5-oxopentanoate + tRNA(Glu) + NADP(+) = L-glutamyl-tRNA(Glu) + NADPH + H(+). The protein operates within porphyrin-containing compound metabolism; protoporphyrin-IX biosynthesis; 5-aminolevulinate from L-glutamyl-tRNA(Glu): step 1/2. Functionally, catalyzes the NADPH-dependent reduction of glutamyl-tRNA(Glu) to glutamate 1-semialdehyde (GSA). In Desulfovibrio desulfuricans (strain ATCC 27774 / DSM 6949 / MB), this protein is Glutamyl-tRNA reductase.